Reading from the N-terminus, the 266-residue chain is Beta-lactamase OXA-20 (266 aa).

The N-terminal stretch at 1–21 (MIIRFLALLFSAVVLVSLGHA) is a signal peptide. Catalysis depends on Ser72, which acts as the Acyl-ester intermediate. N6-carboxylysine is present on Lys75. 210-212 (KTG) provides a ligand contact to substrate.

The protein belongs to the class-D beta-lactamase family.

The enzyme catalyses a beta-lactam + H2O = a substituted beta-amino acid. Inhibited by clavulanic acid. This is an oxacillin-hydrolyzing beta-lactamase. In Pseudomonas aeruginosa, this protein is Beta-lactamase OXA-20 (bla).